Reading from the N-terminus, the 52-residue chain is Large ribosomal subunit protein bL33 (52 aa).

The protein belongs to the bacterial ribosomal protein bL33 family.

In Anaeromyxobacter dehalogenans (strain 2CP-C), this protein is Large ribosomal subunit protein bL33.